The primary structure comprises 130 residues: Annexin A1 (130 aa).

An Isoglutamyl lysine isopeptide (Gln-Lys) (interchain with K-?) cross-link involves residue Gln-19. Ser-24 is modified (phosphoserine; by PKC). Annexin repeat units lie at residues 37 to 108 (FDPS…ALLK) and 109 to 130 (TPAQ…TDRR). Residues Gly-54, Val-55, Glu-57, Lys-92, Leu-95, Glu-100, Met-122, Gly-124, Gly-126, Thr-127, and Arg-130 each contribute to the Ca(2+) site.

Belongs to the annexin family.

It localises to the nucleus. The protein localises to the cytoplasm. Its subcellular location is the cell projection. It is found in the cilium. The protein resides in the basolateral cell membrane. It localises to the lateral cell membrane. The protein localises to the cell membrane. Its subcellular location is the apical cell membrane. It is found in the membrane. The protein resides in the early endosome. It localises to the cytoplasmic vesicle membrane. The protein localises to the endosome membrane. Its subcellular location is the secreted. It is found in the extracellular space. The protein resides in the extracellular exosome. It localises to the cytoplasmic vesicle. The protein localises to the secretory vesicle lumen. Its subcellular location is the phagocytic cup. Its function is as follows. Plays important roles in the innate immune response as effector of glucocorticoid-mediated responses and regulator of the inflammatory process. Has anti-inflammatory activity. Plays a role in glucocorticoid-mediated down-regulation of the early phase of the inflammatory response. Promotes resolution of inflammation and wound healing. Functions at least in part by activating the formyl peptide receptors and downstream signaling cascades. Promotes chemotaxis of granulocytes and monocytes via activation of the formyl peptide receptors. Contributes to the adaptive immune response by enhancing signaling cascades that are triggered by T-cell activation, regulates differentiation and proliferation of activated T-cells. Promotes the differentiation of T-cells into Th1 cells and negatively regulates differentiation into Th2 cells. Has no effect on unstimulated T-cells. Promotes rearrangement of the actin cytoskeleton, cell polarization and cell migration. Negatively regulates hormone exocytosis via activation of the formyl peptide receptors and reorganization of the actin cytoskeleton. Has high affinity for Ca(2+) and can bind up to eight Ca(2+) ions. Displays Ca(2+)-dependent binding to phospholipid membranes. Plays a role in the formation of phagocytic cups and phagosomes. Plays a role in phagocytosis by mediating the Ca(2+)-dependent interaction between phagosomes and the actin cytoskeleton. The polypeptide is Annexin A1 (ANXA1) (Gallus gallus (Chicken)).